The primary structure comprises 319 residues: Acetyl-coenzyme A carboxylase carboxyl transferase subunit alpha (319 aa).

A CoA carboxyltransferase C-terminal domain is found at 39 to 293 (RLQKKSNDLT…KAVLEKQLHE (255 aa)).

This sequence belongs to the AccA family. In terms of assembly, acetyl-CoA carboxylase is a heterohexamer composed of biotin carboxyl carrier protein (AccB), biotin carboxylase (AccC) and two subunits each of ACCase subunit alpha (AccA) and ACCase subunit beta (AccD).

It is found in the cytoplasm. It carries out the reaction N(6)-carboxybiotinyl-L-lysyl-[protein] + acetyl-CoA = N(6)-biotinyl-L-lysyl-[protein] + malonyl-CoA. Its pathway is lipid metabolism; malonyl-CoA biosynthesis; malonyl-CoA from acetyl-CoA: step 1/1. In terms of biological role, component of the acetyl coenzyme A carboxylase (ACC) complex. First, biotin carboxylase catalyzes the carboxylation of biotin on its carrier protein (BCCP) and then the CO(2) group is transferred by the carboxyltransferase to acetyl-CoA to form malonyl-CoA. This is Acetyl-coenzyme A carboxylase carboxyl transferase subunit alpha from Neisseria gonorrhoeae (strain ATCC 700825 / FA 1090).